We begin with the raw amino-acid sequence, 403 residues long: Tripartite motif-containing protein 59 (403 aa).

Residues 10–60 (CPICYSIFEDPRVLPCSHTFCRNCLENVLQASGNFYIWRPLRIPLKCPNCR) form an RING-type zinc finger. The B box-type zinc finger occupies 92 to 134 (PDVVTCPEHYRQPLNVYCLLDKKLVCGHCLTIGQHHGHPIDDL). Positions 97, 100, 120, and 126 each coordinate Zn(2+). A coiled-coil region spans residues 163–246 (LIEKLEEQKC…TITTSLQDES (84 aa)). Residues 329-349 (ILNIAIVSLISVILMLILLFN) traverse the membrane as a helical segment.

The protein belongs to the TRIM/RBCC family. As to quaternary structure, interacts with ECSIT. Moderately expressed in the spleen, brain and heart and very highly expressed in the testis.

Its subcellular location is the endoplasmic reticulum membrane. It carries out the reaction S-ubiquitinyl-[E2 ubiquitin-conjugating enzyme]-L-cysteine + [acceptor protein]-L-lysine = [E2 ubiquitin-conjugating enzyme]-L-cysteine + N(6)-ubiquitinyl-[acceptor protein]-L-lysine.. Its pathway is protein modification; protein ubiquitination. E3 ubiquitin ligase involved in different processes such as development and immune response. Serves as a negative regulator for innate immune signaling pathways by suppressing RLR-induced activation of IRF3/7 and NF-kappa-B via interaction with adapter ECSIT. Regulates autophagy through modulating both the transcription and the ubiquitination of BECN1. On the one hand, regulates the transcription of BECN1 through negatively modulating the NF-kappa-B pathway. On the other hand, regulates TRAF6-mediated 'Lys-63'-linked ubiquitination of BECN1, thus affecting the formation of the BECN1-PIK3C3 complex. In addition, mediates 'Lys-48'-linked ubiquitination of TRAF6 and thereby promotes TRAF6 proteasomal degradation. Also acts as a critical regulator for early embryo development from blastocyst stage to gastrula through modulating F-actin assembly and WASH1 'Lys-63'-linked ubiquitination. The polypeptide is Tripartite motif-containing protein 59 (Trim59) (Mus musculus (Mouse)).